An 860-amino-acid polypeptide reads, in one-letter code: DNA mismatch repair protein MutS (860 aa).

607–614 (GPNMSGKS) is a binding site for ATP.

Belongs to the DNA mismatch repair MutS family.

Its function is as follows. This protein is involved in the repair of mismatches in DNA. It is possible that it carries out the mismatch recognition step. This protein has a weak ATPase activity. The sequence is that of DNA mismatch repair protein MutS from Listeria monocytogenes serotype 4a (strain HCC23).